A 136-amino-acid polypeptide reads, in one-letter code: Large-conductance mechanosensitive channel (136 aa).

The next 2 membrane-spanning stretches (helical) occupy residues 9 to 29 (AFAS…GAAF) and 79 to 99 (IQTV…LKAI).

The protein belongs to the MscL family. In terms of assembly, homopentamer.

It is found in the cell inner membrane. Functionally, channel that opens in response to stretch forces in the membrane lipid bilayer. May participate in the regulation of osmotic pressure changes within the cell. In Shewanella sp. (strain MR-4), this protein is Large-conductance mechanosensitive channel.